Here is a 222-residue protein sequence, read N- to C-terminus: Flagellin B5 (222 aa).

Positions M1–G4 are excised as a propeptide.

Belongs to the archaeal flagellin family.

The protein localises to the archaeal flagellum. In terms of biological role, flagellin is the subunit protein which polymerizes to form the filaments of archaeal flagella. This Pyrococcus abyssi (strain GE5 / Orsay) protein is Flagellin B5 (flaB5).